Here is a 234-residue protein sequence, read N- to C-terminus: Octanoyltransferase (234 aa).

Residues I43–L231 enclose the BPL/LPL catalytic domain. Substrate contacts are provided by residues R88–H95, A160–G162, and G173–A175. Residue C191 is the Acyl-thioester intermediate of the active site.

Belongs to the LipB family.

It is found in the cytoplasm. It catalyses the reaction octanoyl-[ACP] + L-lysyl-[protein] = N(6)-octanoyl-L-lysyl-[protein] + holo-[ACP] + H(+). The protein operates within protein modification; protein lipoylation via endogenous pathway; protein N(6)-(lipoyl)lysine from octanoyl-[acyl-carrier-protein]: step 1/2. Catalyzes the transfer of endogenously produced octanoic acid from octanoyl-acyl-carrier-protein onto the lipoyl domains of lipoate-dependent enzymes. Lipoyl-ACP can also act as a substrate although octanoyl-ACP is likely to be the physiological substrate. The sequence is that of Octanoyltransferase from Christiangramia forsetii (strain DSM 17595 / CGMCC 1.15422 / KT0803) (Gramella forsetii).